The following is a 252-amino-acid chain: 3-dehydroquinate dehydratase (252 aa).

3-dehydroquinate contacts are provided by residues serine 21, glutamate 46–arginine 48, and arginine 82. Histidine 143 (proton donor/acceptor) is an active-site residue. Lysine 170 serves as the catalytic Schiff-base intermediate with substrate. Residues arginine 213, serine 232, and glutamine 236 each coordinate 3-dehydroquinate.

The protein belongs to the type-I 3-dehydroquinase family. In terms of assembly, homodimer.

It catalyses the reaction 3-dehydroquinate = 3-dehydroshikimate + H2O. The protein operates within metabolic intermediate biosynthesis; chorismate biosynthesis; chorismate from D-erythrose 4-phosphate and phosphoenolpyruvate: step 3/7. In terms of biological role, involved in the third step of the chorismate pathway, which leads to the biosynthesis of aromatic amino acids. Catalyzes the cis-dehydration of 3-dehydroquinate (DHQ) and introduces the first double bond of the aromatic ring to yield 3-dehydroshikimate. The polypeptide is 3-dehydroquinate dehydratase (Escherichia coli O6:K15:H31 (strain 536 / UPEC)).